Reading from the N-terminus, the 241-residue chain is Caffeoyl-CoA O-methyltransferase (241 aa).

Blocked amino end (Met) is present on methionine 1. Lysine 15 is a substrate binding site. S-adenosyl-L-methionine is bound by residues threonine 57, glutamate 79, 81–82, serine 87, aspartate 105, and alanine 134; that span reads GV. Aspartate 157 contacts substrate. Aspartate 157 provides a ligand contact to a divalent metal cation. Aspartate 159 lines the S-adenosyl-L-methionine pocket. A divalent metal cation-binding residues include aspartate 183 and asparagine 184. Asparagine 188 is a binding site for substrate.

This sequence belongs to the class I-like SAM-binding methyltransferase superfamily. Cation-dependent O-methyltransferase family. CCoAMT subfamily. In terms of assembly, homodimer. Requires a divalent metal cation as cofactor. As to expression, roots and leaves.

The enzyme catalyses (E)-caffeoyl-CoA + S-adenosyl-L-methionine = (E)-feruloyl-CoA + S-adenosyl-L-homocysteine + H(+). The protein operates within aromatic compound metabolism; phenylpropanoid biosynthesis. In terms of biological role, methylates caffeoyl-CoA to feruloyl-CoA and 5-hydroxyferuloyl-CoA to sinapoyl-CoA. Plays a role in the synthesis of feruloylated polysaccharides. Involved in the reinforcement of the plant cell wall. Also involved in the responding to wounding or pathogen challenge by the increased formation of cell wall-bound ferulic acid polymers. In Petroselinum crispum (Parsley), this protein is Caffeoyl-CoA O-methyltransferase.